The sequence spans 216 residues: Lipoprotein-releasing system ATP-binding protein LolD (216 aa).

The 215-residue stretch at 2–216 folds into the ABC transporter domain; the sequence is IHLEGITKSF…TIHMVDGNII (215 aa). Residue 34–41 participates in ATP binding; sequence GPSGAGKT.

It belongs to the ABC transporter superfamily. Lipoprotein translocase (TC 3.A.1.125) family. As to quaternary structure, the complex is composed of two ATP-binding proteins (LolD) and two transmembrane proteins (LolC and LolE).

It is found in the cell inner membrane. Part of the ABC transporter complex LolCDE involved in the translocation of mature outer membrane-directed lipoproteins, from the inner membrane to the periplasmic chaperone, LolA. Responsible for the formation of the LolA-lipoprotein complex in an ATP-dependent manner. The protein is Lipoprotein-releasing system ATP-binding protein LolD of Bacteroides fragilis (strain YCH46).